The following is a 592-amino-acid chain: Calnexin (592 aa).

A signal peptide spans 1 to 20 (MEGKWLLCMLLVLGTAIVEA). Residues 21–481 (HDGHDDDVID…QMIEAAEERP (461 aa)) lie on the Lumenal side of the membrane. Ca(2+) contacts are provided by Ser74 and Asp117. Lys137 is modified (N6-acetyllysine). A disulfide bridge links Cys160 with Cys194. Tyr164, Lys166, Tyr185, and Asp192 together coordinate an alpha-D-glucoside. The disordered stretch occupies residues 260–345 (GNLLNDMTPP…AEKPEDWDED (86 aa)). The span at 274–319 (REIEDPEDRKPEDWDERPKIPDPEAVKPDDWDEDAPAKIPDEEATK) shows a compositional bias: basic and acidic residues. Residues 276-409 (IEDPEDRKPE…RKIPNPDFFE (134 aa)) form a p domain (Extended arm) region. Tandem repeats lie at residues 278–290 (DPED…WDER), 295–307 (DPEA…WDED), 314–326 (DEEA…WLDD), 333–345 (DPDA…WDED), and 348–358 (GEWEAPQIANP). 4 X approximate repeats regions lie at residues 278–345 (DPED…WDED) and 348–405 (GEWE…IPNP). Positions 323–345 (WLDDEPEYVPDPDAEKPEDWDED) are enriched in acidic residues. The interval 326–359 (DEPEYVPDPDAEKPEDWDEDMDGEWEAPQIANPK) is interaction with PPIB. Residues Cys360 and Cys366 are joined by a disulfide bond. 3 repeat units span residues 367-377 (GVWQRPMIDNP), 381-391 (GKWKPPMIDNP), and 395-405 (GIWKPRKIPNP). Glu425 is an an alpha-D-glucoside binding site. Ca(2+) is bound at residue Asp436. A helical membrane pass occupies residues 482 to 502 (WLWVVYILTVALPVFLVILFC). 2 S-palmitoyl cysteine lipidation sites follow: Cys502 and Cys503. Over 503-592 (CSGKKQTSAM…SPRNRKPRRE (90 aa)) the chain is Cytoplasmic. Residues 503–592 (CSGKKQTSAM…SPRNRKPRRE (90 aa)) form a sufficient to mediate interaction with SGIP1 region. The segment at 511–592 (AMEYKKTDAP…SPRNRKPRRE (82 aa)) is disordered. Over residues 525-547 (KEEEEEKEEEKDKGDEEEEGEEK) the composition is skewed to acidic residues. A Phosphoserine modification is found at Ser554. Residue Thr562 is modified to Phosphothreonine. Ser564 is modified (phosphoserine; by MAPK3). Position 583 is a phosphoserine (Ser583).

The protein belongs to the calreticulin family. As to quaternary structure, interacts with MAPK3/ERK1. Interacts with KCNH2. Associates with ribosomes. Interacts with SGIP1; involved in negative regulation of endocytosis. The palmitoylated form interacts with the ribosome-translocon complex component SSR1, promoting efficient folding of glycoproteins. Interacts with SERPINA2P/SERPINA2 and with the S and Z variants of SERPINA1. Interacts with PPIB. Interacts with ZNRF4. Interacts with SMIM22. Interacts with TMX2. Interacts with TMEM35A/NACHO and CHRNA7. Interacts with reticulophagy regulators RETREG2 and RETREG3. Interacts with DNM1L; may form part of a larger protein complex at the ER-mitochondrial interface during mitochondrial fission. Interacts with ADAM7. Phosphorylated at Ser-564 by MAPK3/ERK1. Phosphorylation by MAPK3/ERK1 increases its association with ribosomes. In terms of processing, palmitoylation by DHHC6 leads to the preferential localization to the perinuclear rough ER. It mediates the association of calnexin with the ribosome-translocon complex (RTC) which is required for efficient folding of glycosylated proteins. Post-translationally, ubiquitinated, leading to proteasomal degradation. Probably ubiquitinated by ZNRF4.

It localises to the endoplasmic reticulum membrane. Its subcellular location is the mitochondrion membrane. The protein resides in the melanosome membrane. Calcium-binding protein that interacts with newly synthesized monoglucosylated glycoproteins in the endoplasmic reticulum. It may act in assisting protein assembly and/or in the retention within the ER of unassembled protein subunits. It seems to play a major role in the quality control apparatus of the ER by the retention of incorrectly folded proteins. Associated with partial T-cell antigen receptor complexes that escape the ER of immature thymocytes, it may function as a signaling complex regulating thymocyte maturation. Additionally it may play a role in receptor-mediated endocytosis at the synapse. This is Calnexin (CANX) from Pongo abelii (Sumatran orangutan).